The sequence spans 159 residues: Phosphopantetheine adenylyltransferase (159 aa).

T10 is a binding site for substrate. Residues 10 to 11 (TF) and H18 each bind ATP. Positions 42, 74, and 88 each coordinate substrate. ATP is bound by residues 89 to 91 (GLR), E99, and 124 to 130 (WSFISSS).

It belongs to the bacterial CoaD family. In terms of assembly, homohexamer. Requires Mg(2+) as cofactor.

It is found in the cytoplasm. The enzyme catalyses (R)-4'-phosphopantetheine + ATP + H(+) = 3'-dephospho-CoA + diphosphate. It functions in the pathway cofactor biosynthesis; coenzyme A biosynthesis; CoA from (R)-pantothenate: step 4/5. Functionally, reversibly transfers an adenylyl group from ATP to 4'-phosphopantetheine, yielding dephospho-CoA (dPCoA) and pyrophosphate. The chain is Phosphopantetheine adenylyltransferase from Shigella dysenteriae serotype 1 (strain Sd197).